The sequence spans 190 residues: Holliday junction branch migration complex subunit RuvA (190 aa).

The segment at 1 to 64 (MIGRISGQLA…EDAQILYGFG (64 aa)) is domain I. The tract at residues 65–137 (SATERAAFRQ…LKGKLGADIG (73 aa)) is domain II. Residues 137–141 (GVQVS) form a flexible linker region. Residues 142–190 (VSSDSQSDILQALVALGYSDRDAALALKALPKDIGVSDGIKLALKALAK) are domain III.

The protein belongs to the RuvA family. In terms of assembly, homotetramer. Forms an RuvA(8)-RuvB(12)-Holliday junction (HJ) complex. HJ DNA is sandwiched between 2 RuvA tetramers; dsDNA enters through RuvA and exits via RuvB. An RuvB hexamer assembles on each DNA strand where it exits the tetramer. Each RuvB hexamer is contacted by two RuvA subunits (via domain III) on 2 adjacent RuvB subunits; this complex drives branch migration. In the full resolvosome a probable DNA-RuvA(4)-RuvB(12)-RuvC(2) complex forms which resolves the HJ.

The protein localises to the cytoplasm. The RuvA-RuvB-RuvC complex processes Holliday junction (HJ) DNA during genetic recombination and DNA repair, while the RuvA-RuvB complex plays an important role in the rescue of blocked DNA replication forks via replication fork reversal (RFR). RuvA specifically binds to HJ cruciform DNA, conferring on it an open structure. The RuvB hexamer acts as an ATP-dependent pump, pulling dsDNA into and through the RuvAB complex. HJ branch migration allows RuvC to scan DNA until it finds its consensus sequence, where it cleaves and resolves the cruciform DNA. The sequence is that of Holliday junction branch migration complex subunit RuvA from Polaromonas sp. (strain JS666 / ATCC BAA-500).